The primary structure comprises 336 residues: Phosphatidylglycerol--prolipoprotein diacylglyceryl transferase (336 aa).

The next 3 membrane-spanning stretches (helical) occupy residues 16–36, 53–73, and 93–113; these read IGPV…VLAV, ILDI…IYHI, and IWNG…AAWA. An a 1,2-diacyl-sn-glycero-3-phospho-(1'-sn-glycerol)-binding site is contributed by Arg141. 3 helical membrane passes run 190–210, 220–240, and 253–273; these read PTFL…VFLG, GSLF…IEAL, and INVW…IVIQ.

The protein belongs to the Lgt family.

Its subcellular location is the cell membrane. The enzyme catalyses L-cysteinyl-[prolipoprotein] + a 1,2-diacyl-sn-glycero-3-phospho-(1'-sn-glycerol) = an S-1,2-diacyl-sn-glyceryl-L-cysteinyl-[prolipoprotein] + sn-glycerol 1-phosphate + H(+). The protein operates within protein modification; lipoprotein biosynthesis (diacylglyceryl transfer). Catalyzes the transfer of the diacylglyceryl group from phosphatidylglycerol to the sulfhydryl group of the N-terminal cysteine of a prolipoprotein, the first step in the formation of mature lipoproteins. The protein is Phosphatidylglycerol--prolipoprotein diacylglyceryl transferase of Bifidobacterium adolescentis (strain ATCC 15703 / DSM 20083 / NCTC 11814 / E194a).